A 220-amino-acid polypeptide reads, in one-letter code: MKLNKYIDHTLLKQDAKKKQIDSLLSEAREYGFASVCVNPTWVEHAKKGLEGTDVKVCTVVGFPLGATTSAVKAFETKEAIQNGADEIDMVINVGALKSGNLALVESDIRAVVEASGDKLVKVIIEACLLTDQEKVVVCQLAQKAGADCVKTSTGFSTGGATIADVTLMRETVGSDMGVKAAGGARSYADALAFVEAGATRIGTSAGVAILKGELADGDY.

D89 serves as the catalytic Proton donor/acceptor. The Schiff-base intermediate with acetaldehyde role is filled by K151. K180 functions as the Proton donor/acceptor in the catalytic mechanism.

It belongs to the DeoC/FbaB aldolase family. DeoC type 1 subfamily.

Its subcellular location is the cytoplasm. It catalyses the reaction 2-deoxy-D-ribose 5-phosphate = D-glyceraldehyde 3-phosphate + acetaldehyde. The protein operates within carbohydrate degradation; 2-deoxy-D-ribose 1-phosphate degradation; D-glyceraldehyde 3-phosphate and acetaldehyde from 2-deoxy-alpha-D-ribose 1-phosphate: step 2/2. Catalyzes a reversible aldol reaction between acetaldehyde and D-glyceraldehyde 3-phosphate to generate 2-deoxy-D-ribose 5-phosphate. This Streptococcus pneumoniae (strain 70585) protein is Deoxyribose-phosphate aldolase.